The primary structure comprises 533 residues: Calcitonin receptor (533 aa).

The N-terminal stretch at Met-1 to Gln-41 is a signal peptide. Topologically, residues Ala-42–Tyr-163 are extracellular. Asn-45, Asn-90, Asn-142, and Asn-147 each carry an N-linked (GlcNAc...) asparagine glycan. Intrachain disulfides connect Cys-72-Cys-98, Cys-89-Cys-129, and Cys-112-Cys-151. A helical transmembrane segment spans residues Val-164–Ile-186. At Phe-187–Val-198 the chain is on the cytoplasmic side. The helical transmembrane segment at Thr-199–Leu-219 threads the bilayer. At Val-220–Cys-273 the chain is on the extracellular side. Cysteines 273 and 343 form a disulfide. The chain crosses the membrane as a helical span at residues Lys-274–Ile-296. Topologically, residues Tyr-297–Leu-313 are cytoplasmic. Residues Arg-314–Thr-334 form a helical membrane-spanning segment. Over Arg-335–His-350 the chain is Extracellular. A helical transmembrane segment spans residues Leu-351 to Val-374. The Cytoplasmic portion of the chain corresponds to Arg-375 to Lys-394. A helical membrane pass occupies residues Ala-395–Phe-413. The Extracellular segment spans residues Pro-414–Val-421. Residues Leu-422–Cys-448 form a helical membrane-spanning segment. Over Asn-449–Ala-533 the chain is Cytoplasmic.

The protein belongs to the G-protein coupled receptor 2 family. Heterodimer of CALCR and RAMP1, RAMP2 or RAMP3; the receptor complexes function as AMYR1, AMYR2 and AMYR3 receptors, respectively, and respond to amylin/IAPP, calcitonin/CT and CGRP1 ligands. Interacts with GPRASP2.

The protein resides in the cell membrane. Functionally, g protein-coupled receptor activated by ligand peptides amylin (IAPP), calcitonin (CT/CALCA) and calcitonin gene-related peptide type 1 (CGRP1/CALCA). CALCR interacts with receptor-activity-modifying proteins RAMP1, 2 and 3 to form receptor complexes AMYR1, 2 and 3, respectively. IAPP, CT and CGRP1 activate CALCR and AMYRs with distinct modes of receptor activation resulting in specific phenotypes. Ligand binding causes a conformation change that triggers signaling via guanine nucleotide-binding proteins (G proteins) and modulates the activity of downstream effectors. Activates cAMP-dependent pathway. The polypeptide is Calcitonin receptor (Mus musculus (Mouse)).